The sequence spans 88 residues: Probable small nuclear ribonucleoprotein F (88 aa).

One can recognise a Sm domain in the interval 7–79 (NPKPFLNNLT…VLYVRGVPED (73 aa)).

Belongs to the snRNP Sm proteins family. SmF/LSm6 subfamily.

It localises to the nucleus. In terms of biological role, probable common Sm protein, is found in U1 and U2 snRNPs and may be part of the spliceosome. This is Probable small nuclear ribonucleoprotein F from Arabidopsis thaliana (Mouse-ear cress).